The sequence spans 243 residues: Voltage-gated monoatomic cation channel TMEM109 (243 aa).

An N-terminal signal peptide occupies residues 1 to 33; that stretch reads MAGSGSSAPWGKHLLHAVLMVLVALVLLHSALA. Residues 34-83 lie on the Lumenal side of the membrane; sequence QSHRDFAPPGQQRREAPVDLLTQIGRSVRETLDTWIGPETMHLISETLSQ. A helical transmembrane segment spans residues 84 to 104; it reads VMWAISSAISVAFFALSGIAA. The Cytoplasmic segment spans residues 105-135; sequence QLLTALGLDGDHLTQGLKLSPSQVQTFLLWG. Residues 136 to 156 form a helical membrane-spanning segment; the sequence is AGALVVYWLLSLLLGLVLAVL. Residues 157–185 are Lumenal-facing; that stretch reads GRILGGLKLVIFLAGFVALVRSVPDPSTR. A helical transmembrane segment spans residues 186–205; sequence ALLLLALLTLYALLSRLTGS. Residues 206–243 are Cytoplasmic-facing; that stretch reads RASGAQLEAKVRGLERQVDELRWRQRRAAKGARSVEEE.

As to quaternary structure, homooligomer. Interacts with CRYAB; in the cellular response to DNA damage. In terms of processing, the N-terminus is blocked. In terms of tissue distribution, widely expressed. Expressed in skeletal, cardiac and smooth muscle cells, in brain, including neuroglial cells, cerebral cortex neurons and cerebellum, but not Purkinje cells. Also detected in Paneth and Goblet cells of the small intestine (but not in the epithelium), duodenal gland, pancreas, parotid gland, testis, thyroid gland and adrenal gland, as well as in epidermis, choroid plexus, ductus epididymidis, lymphocytes, fibroblasts, endothelial cells and seminiferous epithelial cells (at protein level). Not detected in mucous cells of the duodenal gland, in hepatocytes nor in uriniferous tubules.

The protein localises to the nucleus outer membrane. The protein resides in the endoplasmic reticulum membrane. It localises to the sarcoplasmic reticulum membrane. It carries out the reaction K(+)(in) = K(+)(out). It catalyses the reaction Ca(2+)(in) = Ca(2+)(out). In terms of biological role, functions as a voltage-gated monoatomic cation channel permeable to both potassium and calcium. Plays a role in the cellular response to DNA damage. This is Voltage-gated monoatomic cation channel TMEM109 from Oryctolagus cuniculus (Rabbit).